Here is a 275-residue protein sequence, read N- to C-terminus: MSNRQAEIAAALDVVPPFADDAALVAEIERRKTFIKNTLKQSGLKVLVLGISGGVDSTTAGRLAQLSVEELRAETGDTDYRFIAVRLPHNTQHDEHDAQDSLKFVNADEEATVNIAASVIGLSEQVSHLQQLSDARRDFVIGNVKARIRMVAQFTIANANNGLVIGTDHAAEAVMGFFTKFGDGACDLAPLSGLVKHQVRAIAAHLGAPQHLVQKTPTADLEELRPGKPDEEAHGVTYAEIDAFLHGQNVSDEAYATIVRTYDATRHKRELPLVP.

50–57 (GISGGVDS) lines the ATP pocket. Position 56 (Asp56) interacts with Mg(2+). Arg147 is a deamido-NAD(+) binding site. Position 167 (Thr167) interacts with ATP. Glu172 is a binding site for Mg(2+). Deamido-NAD(+)-binding residues include Lys180 and Asp187. ATP contacts are provided by Lys196 and Thr218. 267–268 (HK) contributes to the deamido-NAD(+) binding site.

The protein belongs to the NAD synthetase family. Homodimer.

The enzyme catalyses deamido-NAD(+) + NH4(+) + ATP = AMP + diphosphate + NAD(+) + H(+). Its pathway is cofactor biosynthesis; NAD(+) biosynthesis; NAD(+) from deamido-NAD(+) (ammonia route): step 1/1. Its function is as follows. Catalyzes the ATP-dependent amidation of deamido-NAD to form NAD. Uses ammonia as a nitrogen source. The protein is NH(3)-dependent NAD(+) synthetase of Ectopseudomonas mendocina (strain ymp) (Pseudomonas mendocina).